The following is a 410-amino-acid chain: F-box protein At3g19890 (410 aa).

Positions 2 to 49 (TMISDLSKDLVEEILSKAPITSLGAVRSTHKQWNALSKGRLLYKAEAK) constitute an F-box domain. The tract at residues 386 to 410 (EDKCKSIKMVDTKRQRKKRKRKSKR) is disordered. Positions 387–398 (DKCKSIKMVDTK) are enriched in basic and acidic residues. Over residues 399-410 (RQRKKRKRKSKR) the composition is skewed to basic residues.

In Arabidopsis thaliana (Mouse-ear cress), this protein is F-box protein At3g19890.